The chain runs to 566 residues: Myo-inositol transporter 1A (566 aa).

At 1-64 the chain is on the cytoplasmic side; sequence MSDEKNYGIS…ERTEKLTKFV (64 aa). The helical transmembrane segment at 65–85 threads the bilayer; sequence VGLALFASVSGFCFGFDTGVI. Over 86-106 the chain is Extracellular; that stretch reads SAALVSIKDDFGHILDDTEKE. The helical transmembrane segment at 107–127 threads the bilayer; the sequence is WISAATSCGALVGALSSGALA. Over 128-140 the chain is Cytoplasmic; sequence DRVGRKWTLAVGD. Residues 141-161 form a helical membrane-spanning segment; it reads VWFTLGAIIICSSFSVVQMIV. The Extracellular segment spans residues 162–163; the sequence is GR. Residues 164–184 form a helical membrane-spanning segment; sequence AVLGLGVGTAAAIAPLYIAEV. Residues 185–192 are Cytoplasmic-facing; that stretch reads APTRFRGA. The chain crosses the membrane as a helical span at residues 193-213; sequence LVTVQSIAITGGQFFSYCIGI. The Extracellular segment spans residues 214-222; sequence PLTGHNGWR. The chain crosses the membrane as a helical span at residues 223-243; the sequence is IQFAIGIVPAVVQAAVVHFLP. Over 244-313 the chain is Cytoplasmic; that stretch reads ESPRYDLLRG…VLTEGKYRKP (70 aa). The helical transmembrane segment at 314 to 334 threads the bilayer; that stretch reads AITALGIGIFQQLCGFNSLMY. The Extracellular segment spans residues 335–349; it reads YAATIFSYAGFDNPT. The helical transmembrane segment at 350-370 threads the bilayer; sequence SVGLIVSGTNWFFTFVAMMIL. Residues 371-377 are Cytoplasmic-facing; the sequence is DRVGKRR. The chain crosses the membrane as a helical span at residues 378–398; the sequence is ILLSTYPGMIAGLALASVAFW. At 399-421 the chain is on the extracellular side; that stretch reads KMTGSTGHRLVEGTEYPQQWSNM. The chain crosses the membrane as a helical span at residues 422 to 442; that stretch reads MLGMMVVFIAFYATGSGNITW. The Cytoplasmic portion of the chain corresponds to 443 to 458; that stretch reads TVGEMFPLEMRGIGAS. The helical transmembrane segment at 459–479 threads the bilayer; it reads ILAGGVWAANIVISATFLTLM. Residues 480–485 are Extracellular-facing; sequence NAIGPT. Residues 486 to 506 form a helical membrane-spanning segment; that stretch reads PTFALYAGICLAGLIFIYFCY. Residues 507–566 are Cytoplasmic-facing; sequence PEPSGLSLEEIQIIYNYGFGVQKSREIRAEHKLKAQEMRDRANSHIGGSATASDDQLNKV. The segment at 546-566 is disordered; that stretch reads DRANSHIGGSATASDDQLNKV. The segment covering 556 to 566 has biased composition (polar residues); sequence ATASDDQLNKV.

Belongs to the major facilitator superfamily. Sugar transporter (TC 2.A.1.1) family.

It is found in the cell membrane. It carries out the reaction myo-inositol(out) + H(+)(out) = myo-inositol(in) + H(+)(in). In terms of biological role, major transporter for myo-inositol. Plays a role in the traversal of the host blood-brain barrier. The protein is Myo-inositol transporter 1A of Cryptococcus neoformans var. grubii serotype A (strain H99 / ATCC 208821 / CBS 10515 / FGSC 9487) (Filobasidiella neoformans var. grubii).